The primary structure comprises 198 residues: Pyridoxal 5'-phosphate synthase subunit PdxT (198 aa).

49–51 (GES) lines the L-glutamine pocket. Cysteine 81 functions as the Nucleophile in the catalytic mechanism. L-glutamine-binding positions include arginine 113 and 141–142 (IR). Catalysis depends on charge relay system residues histidine 177 and glutamate 179.

It belongs to the glutaminase PdxT/SNO family. In terms of assembly, in the presence of PdxS, forms a dodecamer of heterodimers. Only shows activity in the heterodimer.

The catalysed reaction is aldehydo-D-ribose 5-phosphate + D-glyceraldehyde 3-phosphate + L-glutamine = pyridoxal 5'-phosphate + L-glutamate + phosphate + 3 H2O + H(+). It catalyses the reaction L-glutamine + H2O = L-glutamate + NH4(+). The protein operates within cofactor biosynthesis; pyridoxal 5'-phosphate biosynthesis. Its function is as follows. Catalyzes the hydrolysis of glutamine to glutamate and ammonia as part of the biosynthesis of pyridoxal 5'-phosphate. The resulting ammonia molecule is channeled to the active site of PdxS. This chain is Pyridoxal 5'-phosphate synthase subunit PdxT, found in Mycobacterium avium (strain 104).